The chain runs to 205 residues: Ribosomal RNA small subunit methyltransferase J (205 aa).

S-adenosyl-L-methionine contacts are provided by residues 56–57 (RD), 72–73 (ER), and aspartate 124.

It belongs to the methyltransferase superfamily. RsmJ family.

Its subcellular location is the cytoplasm. It carries out the reaction guanosine(1516) in 16S rRNA + S-adenosyl-L-methionine = N(2)-methylguanosine(1516) in 16S rRNA + S-adenosyl-L-homocysteine + H(+). Specifically methylates the guanosine in position 1516 of 16S rRNA. In Brucella anthropi (strain ATCC 49188 / DSM 6882 / CCUG 24695 / JCM 21032 / LMG 3331 / NBRC 15819 / NCTC 12168 / Alc 37) (Ochrobactrum anthropi), this protein is Ribosomal RNA small subunit methyltransferase J.